Consider the following 172-residue polypeptide: Large ribosomal subunit protein uL10 (172 aa).

It belongs to the universal ribosomal protein uL10 family. Part of the ribosomal stalk of the 50S ribosomal subunit. The N-terminus interacts with L11 and the large rRNA to form the base of the stalk. The C-terminus forms an elongated spine to which L12 dimers bind in a sequential fashion forming a multimeric L10(L12)X complex.

Its function is as follows. Forms part of the ribosomal stalk, playing a central role in the interaction of the ribosome with GTP-bound translation factors. The sequence is that of Large ribosomal subunit protein uL10 from Rhizobium etli (strain ATCC 51251 / DSM 11541 / JCM 21823 / NBRC 15573 / CFN 42).